The following is a 117-amino-acid chain: Large ribosomal subunit protein uL18 (117 aa).

It belongs to the universal ribosomal protein uL18 family. As to quaternary structure, part of the 50S ribosomal subunit; part of the 5S rRNA/L5/L18/L25 subcomplex. Contacts the 5S and 23S rRNAs.

Its function is as follows. This is one of the proteins that bind and probably mediate the attachment of the 5S RNA into the large ribosomal subunit, where it forms part of the central protuberance. This chain is Large ribosomal subunit protein uL18, found in Coxiella burnetii (strain CbuK_Q154) (Coxiella burnetii (strain Q154)).